Here is a 319-residue protein sequence, read N- to C-terminus: Annexin A5 (319 aa).

At A2 the chain carries N-acetylalanine. 4 Annexin repeats span residues 13–84, 85–156, 168–240, and 244–315; these read FDGR…AMMK, PSRL…VLLQ, AQVE…AVVK, and SIPA…LLCG. Residue K27 forms a Glycyl lysine isopeptide (Lys-Gly) (interchain with G-Cter in SUMO1); alternate linkage. K27 is covalently cross-linked (Glycyl lysine isopeptide (Lys-Gly) (interchain with G-Cter in SUMO2); alternate). S35 is subject to Phosphoserine. K68, K74, K77, K95, and K99 each carry N6-acetyllysine. Position 288 is an N6-succinyllysine (K288). Residues 312–318 carry the [IL]-x-C-x-x-[DE] motif motif; it reads LLCGGED.

This sequence belongs to the annexin family. Monomer. Binds ATRX and EIF5B. Post-translationally, S-nitrosylation is induced by interferon-gamma and oxidatively-modified low-densitity lipoprotein (LDL(ox)) possibly implicating the iNOS-S100A8/9 transnitrosylase complex.

This protein is an anticoagulant protein that acts as an indirect inhibitor of the thromboplastin-specific complex, which is involved in the blood coagulation cascade. The protein is Annexin A5 (Anxa5) of Mus musculus (Mouse).